Reading from the N-terminus, the 52-residue chain is UPF0181 protein VPA0916 (52 aa).

Belongs to the UPF0181 family.

This chain is UPF0181 protein VPA0916, found in Vibrio parahaemolyticus serotype O3:K6 (strain RIMD 2210633).